The primary structure comprises 95 residues: Phosphoribosyl-ATP pyrophosphatase (95 aa).

Belongs to the PRA-PH family.

The protein localises to the cytoplasm. It catalyses the reaction 1-(5-phospho-beta-D-ribosyl)-ATP + H2O = 1-(5-phospho-beta-D-ribosyl)-5'-AMP + diphosphate + H(+). Its pathway is amino-acid biosynthesis; L-histidine biosynthesis; L-histidine from 5-phospho-alpha-D-ribose 1-diphosphate: step 2/9. The chain is Phosphoribosyl-ATP pyrophosphatase from Sulfolobus acidocaldarius (strain ATCC 33909 / DSM 639 / JCM 8929 / NBRC 15157 / NCIMB 11770).